The following is an 803-amino-acid chain: Spondin-1 (803 aa).

The N-terminal stretch at 1–23 (MGLIFQPLFWQYVATSYALMVLG) is a signal peptide. The Reelin domain occupies 24 to 190 (FLDETVEKAI…DLTLEGGNEK (167 aa)). Cystine bridges form between cysteine 39/cysteine 124, cysteine 152/cysteine 178, cysteine 195/cysteine 331, cysteine 196/cysteine 335, cysteine 198/cysteine 409, cysteine 437/cysteine 474, cysteine 448/cysteine 483, cysteine 453/cysteine 488, cysteine 496/cysteine 532, cysteine 507/cysteine 511, cysteine 542/cysteine 548, cysteine 553/cysteine 589, cysteine 564/cysteine 568, and cysteine 599/cysteine 604. Residues 191–383 (TIPDCCACGT…LTSLDHPQSP (193 aa)) enclose the Spondin domain. N-linked (GlcNAc...) asparagine glycosylation occurs at asparagine 210. Aspartate 320, aspartate 349, and aspartate 353 together coordinate Ca(2+). A disordered region spans residues 353 to 389 (DSGVTYESPNKPTIPQDKIRPLTSLDHPQSPSMTRGG). Residues 354-365 (SGVTYESPNKPT) show a composition bias toward polar residues. TSP type-1 domains follow at residues 436-489 (TCIY…PGCS), 495-549 (TCMM…EECE), 552-605 (SCIV…PECH), 608-662 (PCVL…PECP), and 664-717 (SCEL…RKCQ). N-linked (GlcNAc...) asparagine glycosylation is present at asparagine 677. The interval 722–741 (NERRHLKDAREKRRSEKIKE) is disordered. The TSP type-1 6 domain maps to 750 to 802 (VCKMKPWTAWTECTKFCGGGIQERFMTVKKRFKSSQFTSCKDKKEIRACNVHP).

As to expression, expressed at high levels in the floor plate.

The protein localises to the secreted. It is found in the extracellular space. The protein resides in the extracellular matrix. Functionally, promotes the attachment of spinal cord and sensory neuron cells and the outgrowth of neurites in vitro. May contribute to the growth and guidance of axons in both the spinal cord and the PNS. This chain is Spondin-1 (spon1), found in Xenopus laevis (African clawed frog).